The following is a 417-amino-acid chain: Serine hydroxymethyltransferase (417 aa).

(6S)-5,6,7,8-tetrahydrofolate-binding positions include Leu-121 and 125-127; that span reads GHL. Residue Lys-230 is modified to N6-(pyridoxal phosphate)lysine. 355–357 serves as a coordination point for (6S)-5,6,7,8-tetrahydrofolate; that stretch reads SPF.

This sequence belongs to the SHMT family. Homodimer. Pyridoxal 5'-phosphate serves as cofactor.

Its subcellular location is the cytoplasm. The catalysed reaction is (6R)-5,10-methylene-5,6,7,8-tetrahydrofolate + glycine + H2O = (6S)-5,6,7,8-tetrahydrofolate + L-serine. It participates in one-carbon metabolism; tetrahydrofolate interconversion. The protein operates within amino-acid biosynthesis; glycine biosynthesis; glycine from L-serine: step 1/1. Catalyzes the reversible interconversion of serine and glycine with tetrahydrofolate (THF) serving as the one-carbon carrier. This reaction serves as the major source of one-carbon groups required for the biosynthesis of purines, thymidylate, methionine, and other important biomolecules. Also exhibits THF-independent aldolase activity toward beta-hydroxyamino acids, producing glycine and aldehydes, via a retro-aldol mechanism. In Legionella pneumophila (strain Lens), this protein is Serine hydroxymethyltransferase.